Reading from the N-terminus, the 445-residue chain is Succinate--CoA ligase [ADP-forming] subunit beta, mitochondrial (445 aa).

Residues 1–17 (MLSNIVKKTIQSSKNLK) constitute a mitochondrion transit peptide. The region spanning 43–270 (QKMMKSYGIN…DNAAFRHPDI (228 aa)) is the ATP-grasp domain. ATP-binding positions include Lys-80 and 87 to 89 (GRG). Mg(2+) is bound by residues Asn-240 and Asp-254. Substrate contacts are provided by residues Asn-305 and 362–364 (GIM).

The protein belongs to the succinate/malate CoA ligase beta subunit family. ATP-specific subunit beta subfamily. Heterodimer of an alpha and a beta subunit. The beta subunit determines specificity for ATP. Mg(2+) serves as cofactor.

The protein resides in the mitochondrion. It catalyses the reaction succinate + ATP + CoA = succinyl-CoA + ADP + phosphate. Its pathway is carbohydrate metabolism; tricarboxylic acid cycle; succinate from succinyl-CoA (ligase route): step 1/1. Its function is as follows. ATP-specific succinyl-CoA synthetase functions in the citric acid cycle (TCA), coupling the hydrolysis of succinyl-CoA to the synthesis of ATP and thus represents the only step of substrate-level phosphorylation in the TCA. The beta subunit provides nucleotide specificity of the enzyme and binds the substrate succinate, while the binding sites for coenzyme A and phosphate are found in the alpha subunit. The protein is Succinate--CoA ligase [ADP-forming] subunit beta, mitochondrial (scsC) of Dictyostelium discoideum (Social amoeba).